We begin with the raw amino-acid sequence, 357 residues long: MSATALRIAPIASRTFQRRLGYLLAGVATGAAATVAYKAQKNNNYYKYNNNNNNNSGFKAGALAAAAGVVHLAHEEDKKTADYQKVYNLIAERLRDDDEYDNYIGYGPVLVRLAWHSSGTWDKNDNTGGSYGGTYRYKKESQDPSNAGLENAAKFLEPVKKQFPWISYGDLYTLGGVVGIQELQGPKIPWRSGRTDLPEDMTPDNGRLPDGDKDANYVRNFYKRLDFNDREVVALLGAHALGKTHLKNSGFEGPWGAANNIFTNEFYLNLLNEDWKLEKNDAGNLQYNSPKGYMMLPTDYALIQDSNYLKIVKEYAADQDAFFRDFSKAFAALLERGIDFPKNQPVHIFKTLDEQGL.

A mitochondrion-targeting transit peptide spans 1–23 (MSATALRIAPIASRTFQRRLGYL). Histidine 116 acts as the Proton acceptor in catalysis. The disordered stretch occupies residues 189-212 (PWRSGRTDLPEDMTPDNGRLPDGD). Residue histidine 239 participates in heme b binding. Catalysis depends on tryptophan 255, which acts as the Tryptophan radical intermediate.

It belongs to the peroxidase family. Cytochrome c peroxidase subfamily. As to quaternary structure, forms a one-to-one complex with cytochrome c. Requires heme b as cofactor.

Its subcellular location is the mitochondrion matrix. It is found in the mitochondrion intermembrane space. It carries out the reaction 2 Fe(II)-[cytochrome c] + H2O2 + 2 H(+) = 2 Fe(III)-[cytochrome c] + 2 H2O. Destroys radicals which are normally produced within the cells and which are toxic to biological systems. The protein is Cytochrome c peroxidase, mitochondrial of Candida glabrata (strain ATCC 2001 / BCRC 20586 / JCM 3761 / NBRC 0622 / NRRL Y-65 / CBS 138) (Yeast).